The following is a 260-amino-acid chain: Ubiquinone/menaquinone biosynthesis C-methyltransferase UbiE (260 aa).

S-adenosyl-L-methionine is bound by residues threonine 83, aspartate 104, and 132-133 (NA).

Belongs to the class I-like SAM-binding methyltransferase superfamily. MenG/UbiE family.

It catalyses the reaction a 2-demethylmenaquinol + S-adenosyl-L-methionine = a menaquinol + S-adenosyl-L-homocysteine + H(+). It carries out the reaction a 2-methoxy-6-(all-trans-polyprenyl)benzene-1,4-diol + S-adenosyl-L-methionine = a 5-methoxy-2-methyl-3-(all-trans-polyprenyl)benzene-1,4-diol + S-adenosyl-L-homocysteine + H(+). The protein operates within quinol/quinone metabolism; menaquinone biosynthesis; menaquinol from 1,4-dihydroxy-2-naphthoate: step 2/2. It functions in the pathway cofactor biosynthesis; ubiquinone biosynthesis. Functionally, methyltransferase required for the conversion of demethylmenaquinol (DMKH2) to menaquinol (MKH2) and the conversion of 2-polyprenyl-6-methoxy-1,4-benzoquinol (DDMQH2) to 2-polyprenyl-3-methyl-6-methoxy-1,4-benzoquinol (DMQH2). The protein is Ubiquinone/menaquinone biosynthesis C-methyltransferase UbiE of Bartonella quintana (strain Toulouse) (Rochalimaea quintana).